A 196-amino-acid polypeptide reads, in one-letter code: Probable malonic semialdehyde reductase RutE (196 aa).

This sequence belongs to the nitroreductase family. HadB/RutE subfamily. It depends on FMN as a cofactor.

It carries out the reaction 3-hydroxypropanoate + NADP(+) = 3-oxopropanoate + NADPH + H(+). Its function is as follows. May reduce toxic product malonic semialdehyde to 3-hydroxypropionic acid, which is excreted. The sequence is that of Probable malonic semialdehyde reductase RutE from Escherichia coli (strain SMS-3-5 / SECEC).